We begin with the raw amino-acid sequence, 453 residues long: Cytochrome b-c1 complex subunit 2, mitochondrial (453 aa).

A mitochondrion-targeting transit peptide spans 1-14; it reads MKLLTRAGSFSRFY. Residues Lys66, Lys199, and Lys250 each carry the N6-acetyllysine modification.

The protein belongs to the peptidase M16 family. UQCRC2/QCR2 subfamily. As to quaternary structure, component of the ubiquinol-cytochrome c oxidoreductase (cytochrome b-c1 complex, complex III, CIII), a multisubunit enzyme composed of 11 subunits. The complex is composed of 3 respiratory subunits cytochrome b, cytochrome c1 and Rieske protein UQCRFS1, 2 core protein subunits UQCRC1/QCR1 and UQCRC2/QCR2, and 6 low-molecular weight protein subunits UQCRH/QCR6, UQCRB/QCR7, UQCRQ/QCR8, UQCR10/QCR9, UQCR11/QCR10 and subunit 9, the cleavage product of Rieske protein UQCRFS1. The complex exists as an obligatory dimer and forms supercomplexes (SCs) in the inner mitochondrial membrane with NADH-ubiquinone oxidoreductase (complex I, CI) and cytochrome c oxidase (complex IV, CIV), resulting in different assemblies (supercomplex SCI(1)III(2)IV(1) and megacomplex MCI(2)III(2)IV(2)). Interacts with RAB5IF. Interacts with STMP1.

The protein localises to the mitochondrion inner membrane. Component of the ubiquinol-cytochrome c oxidoreductase, a multisubunit transmembrane complex that is part of the mitochondrial electron transport chain which drives oxidative phosphorylation. The respiratory chain contains 3 multisubunit complexes succinate dehydrogenase (complex II, CII), ubiquinol-cytochrome c oxidoreductase (cytochrome b-c1 complex, complex III, CIII) and cytochrome c oxidase (complex IV, CIV), that cooperate to transfer electrons derived from NADH and succinate to molecular oxygen, creating an electrochemical gradient over the inner membrane that drives transmembrane transport and the ATP synthase. The cytochrome b-c1 complex catalyzes electron transfer from ubiquinol to cytochrome c, linking this redox reaction to translocation of protons across the mitochondrial inner membrane, with protons being carried across the membrane as hydrogens on the quinol. In the process called Q cycle, 2 protons are consumed from the matrix, 4 protons are released into the intermembrane space and 2 electrons are passed to cytochrome c. The 2 core subunits UQCRC1/QCR1 and UQCRC2/QCR2 are homologous to the 2 mitochondrial-processing peptidase (MPP) subunits beta-MPP and alpha-MPP respectively, and they seem to have preserved their MPP processing properties. May be involved in the in situ processing of UQCRFS1 into the mature Rieske protein and its mitochondrial targeting sequence (MTS)/subunit 9 when incorporated into complex III. The chain is Cytochrome b-c1 complex subunit 2, mitochondrial (UQCRC2) from Homo sapiens (Human).